The following is a 773-amino-acid chain: Cellobiose dehydrogenase (773 aa).

A signal peptide spans 1 to 18 (MLGRSLLALLPFVGLAFS). Gln19 carries the pyrrolidone carboxylic acid modification. The tract at residues 19 to 208 (QSASQFTDPT…YQNYLNGDSG (190 aa)) is heme domain. Heme is bound by residues Met83 and His181. A disordered region spans residues 203–227 (LNGDSGNPTTTSTKPTSTSSSVTTG). Low complexity predominate over residues 210-227 (PTTTSTKPTSTSSSVTTG). Positions 235 to 773 (YDYIIVGAGP…AKILALAGGP (539 aa)) are oxidoreductase. Residue 236–265 (DYIIVGAGPGGIIAADRLSEAGKKVLLLER) coordinates FAD. The Proton acceptor role is filled by His707.

It in the C-terminal section; belongs to the GMC oxidoreductase family. FAD serves as cofactor. It depends on heme as a cofactor.

The protein resides in the secreted. It carries out the reaction D-cellobiose + A = D-cellobiono-1,5-lactone + AH2. Functionally, degrades both lignin and cellulose. Oxidizes cellobiose to cellobionolactone. The protein is Cellobiose dehydrogenase (CDH-1) of Phanerodontia chrysosporium (White-rot fungus).